Reading from the N-terminus, the 100-residue chain is Aspartyl/glutamyl-tRNA(Asn/Gln) amidotransferase subunit C (100 aa).

Belongs to the GatC family. Heterotrimer of A, B and C subunits.

The catalysed reaction is L-glutamyl-tRNA(Gln) + L-glutamine + ATP + H2O = L-glutaminyl-tRNA(Gln) + L-glutamate + ADP + phosphate + H(+). The enzyme catalyses L-aspartyl-tRNA(Asn) + L-glutamine + ATP + H2O = L-asparaginyl-tRNA(Asn) + L-glutamate + ADP + phosphate + 2 H(+). Its function is as follows. Allows the formation of correctly charged Asn-tRNA(Asn) or Gln-tRNA(Gln) through the transamidation of misacylated Asp-tRNA(Asn) or Glu-tRNA(Gln) in organisms which lack either or both of asparaginyl-tRNA or glutaminyl-tRNA synthetases. The reaction takes place in the presence of glutamine and ATP through an activated phospho-Asp-tRNA(Asn) or phospho-Glu-tRNA(Gln). This Streptococcus pyogenes serotype M18 (strain MGAS8232) protein is Aspartyl/glutamyl-tRNA(Asn/Gln) amidotransferase subunit C.